A 224-amino-acid chain; its full sequence is Redox-sensing transcriptional repressor Rex (224 aa).

A DNA-binding region (H-T-H motif) is located at residues 17 to 56 (RYHRCLEELLKNDIKRISSKELSERMGVTASQIRQDLNNF). Position 91–96 (91–96 (GAGNLG)) interacts with NAD(+).

This sequence belongs to the transcriptional regulatory Rex family. As to quaternary structure, homodimer.

The protein localises to the cytoplasm. Its function is as follows. Modulates transcription in response to changes in cellular NADH/NAD(+) redox state. This is Redox-sensing transcriptional repressor Rex from Caldanaerobacter subterraneus subsp. tengcongensis (strain DSM 15242 / JCM 11007 / NBRC 100824 / MB4) (Thermoanaerobacter tengcongensis).